The chain runs to 272 residues: Probable glutathione S-transferase DHAR2, chloroplastic (272 aa).

A chloroplast-targeting transit peptide spans 1 to 57 (MAVLLRTTTSATTATSGGSSSATALLATTFRRGGRRLLLLPATRGSAPRRAALLTAR). Glutathione contacts are provided by Lys68 and Asp79. 2 residues coordinate L-ascorbate: Lys68 and Asp79. One can recognise a GST N-terminal domain in the interval 70-148 (SLTVPDRLGD…AIEEKYPEPS (79 aa)). Catalysis depends on Cys80, which acts as the Nucleophile. The glutathione site is built by Lys107, Val120, Ser133, His219, and Trp266. The region spanning 126 to 272 (EEQWVADSDV…IAGWRPKVMG (147 aa)) is the GST C-terminal domain. Lys269 serves as a coordination point for L-ascorbate.

The protein belongs to the GST superfamily. DHAR family. In terms of assembly, monomer.

It localises to the plastid. The protein resides in the chloroplast. It carries out the reaction RX + glutathione = an S-substituted glutathione + a halide anion + H(+). It catalyses the reaction L-dehydroascorbate + 2 glutathione = glutathione disulfide + L-ascorbate. Functionally, involved in ascorbate homeostasis. Maintains redox pools of ascorbate by recycling dihydroascorbate (DHA) to ascorbate. Involved in scavenging reactive oxygen species (ROS) under oxidative stresses. The protein is Probable glutathione S-transferase DHAR2, chloroplastic of Oryza sativa subsp. japonica (Rice).